The sequence spans 453 residues: Bifunctional protein GlmU (453 aa).

A pyrophosphorylase region spans residues 1–225; that stretch reads MNIVILAAGT…EWETLGVNSK (225 aa). Residues 6–9, K20, Q71, 76–77, 98–100, G135, E150, N165, and N223 each bind UDP-N-acetyl-alpha-D-glucosamine; these read LAAG, GT, and YGD. Mg(2+) is bound at residue D100. Position 223 (N223) interacts with Mg(2+). The interval 226-246 is linker; that stretch reads QQLAELERIHQHNVADALLVA. Positions 247 to 453 are N-acetyltransferase; the sequence is GVTLADPARL…GYVRPTKKKS (207 aa). R329 and K347 together coordinate UDP-N-acetyl-alpha-D-glucosamine. The active-site Proton acceptor is H359. Positions 362 and 373 each coordinate UDP-N-acetyl-alpha-D-glucosamine. Acetyl-CoA contacts are provided by residues A376, 382 to 383, S401, and A419; that span reads NY.

This sequence in the N-terminal section; belongs to the N-acetylglucosamine-1-phosphate uridyltransferase family. In the C-terminal section; belongs to the transferase hexapeptide repeat family. As to quaternary structure, homotrimer. The cofactor is Mg(2+).

Its subcellular location is the cytoplasm. The catalysed reaction is alpha-D-glucosamine 1-phosphate + acetyl-CoA = N-acetyl-alpha-D-glucosamine 1-phosphate + CoA + H(+). It catalyses the reaction N-acetyl-alpha-D-glucosamine 1-phosphate + UTP + H(+) = UDP-N-acetyl-alpha-D-glucosamine + diphosphate. The protein operates within nucleotide-sugar biosynthesis; UDP-N-acetyl-alpha-D-glucosamine biosynthesis; N-acetyl-alpha-D-glucosamine 1-phosphate from alpha-D-glucosamine 6-phosphate (route II): step 2/2. It participates in nucleotide-sugar biosynthesis; UDP-N-acetyl-alpha-D-glucosamine biosynthesis; UDP-N-acetyl-alpha-D-glucosamine from N-acetyl-alpha-D-glucosamine 1-phosphate: step 1/1. It functions in the pathway bacterial outer membrane biogenesis; LPS lipid A biosynthesis. Functionally, catalyzes the last two sequential reactions in the de novo biosynthetic pathway for UDP-N-acetylglucosamine (UDP-GlcNAc). The C-terminal domain catalyzes the transfer of acetyl group from acetyl coenzyme A to glucosamine-1-phosphate (GlcN-1-P) to produce N-acetylglucosamine-1-phosphate (GlcNAc-1-P), which is converted into UDP-GlcNAc by the transfer of uridine 5-monophosphate (from uridine 5-triphosphate), a reaction catalyzed by the N-terminal domain. In Paraburkholderia phytofirmans (strain DSM 17436 / LMG 22146 / PsJN) (Burkholderia phytofirmans), this protein is Bifunctional protein GlmU.